The following is a 589-amino-acid chain: Putative phospholipase B-like 2 (589 aa).

The first 41 residues, 1-41 (MVGQMYCYPGSHLARALTRALALALVLALLVGPFLSGLAGA), serve as a signal peptide directing secretion. N-linked (GlcNAc...) asparagine glycans are attached at residues N88 and N110. A disulfide bond links C142 and C152. N-linked (GlcNAc...) asparagine glycans are attached at residues N231, N436, and N465. Cysteines 492 and 495 form a disulfide. N-linked (GlcNAc...) asparagine glycosylation is present at N515.

The protein belongs to the phospholipase B-like family. Interacts with IGF2R. In terms of processing, the p76 protein is synthesized as a 80 kDa precursor which is then processed into a N-terminal 32 kDa form and a C-terminal 45 kDa form. Post-translationally, glycosylated; contains mannose 6-phosphate sugars. In terms of tissue distribution, ubiquitously expressed, with highest levels in heart, brain and liver.

It is found in the lysosome lumen. Functionally, putative phospholipase. The polypeptide is Putative phospholipase B-like 2 (PLBD2) (Homo sapiens (Human)).